A 723-amino-acid polypeptide reads, in one-letter code: MIYQAETLQVKEVQDGVAEILFCAPNSVNKLDLATLASLDKALDALTAHSGLKGVMLTSDKEAFIVGADITEFLGLFAKPEEELDQWLQFANSIFNKLEDLPVPTVAVVKGHTLGGGCECVLATDLRIGDKTTSIGLPETKLGIMPGFGGCVRLPRVIGADSAMEIITQGKACRAEEALKIGLLDAVVDSDRLYASALQTLTDAINEKIDWKARRQQKTSALTLSKLEAMMSFTMAKGLVAQVAGPHYPAPMTAVVTIEEGARFARNQALDIERKHFVKLAKSEEAKALVGLFLNDQYIKGIAKKAAKSANKETQRAAVLGAGIMGGGIAYQSALKGVPVIMKDIAQASLDLGMTEASKLLNKQLERGKIDGFKMAGILASITPSLHYAGIDNADIIVEAVVENPKVKAAVLSEVEEQVSEETVLTSNTSTIPINLLAKSLKRPENFCGMHFFNPVHRMPLVEIIRGEHTSDETINRVVAYAAKMGKSPIVVNDCPGFFVNRVLFPYFGGFSMLLRDGADFTQIDKVMERKFGWPMGPAYLLDVVGIDTAHHAQAVMAQGFPERMGKQGRDAIDALFEANKYGQKNGSGFYTYTMDKKGKPKKAFSDEIVPILAPVCAAQQAFDDQTIIQRMMIPMINEVVLCLQEGIIASAQEADMALVYGLGFPPFRGGVFRYLDSVGIANFVAMAQQHVELGAMYQVPQMLIDMAEKGQTFYGAQQQGSI.

The segment at 1–189 (MIYQAETLQV…KIGLLDAVVD (189 aa)) is enoyl-CoA hydratase/isomerase. A substrate-binding site is contributed by aspartate 296. Positions 311 to 723 (NKETQRAAVL…FYGAQQQGSI (413 aa)) are 3-hydroxyacyl-CoA dehydrogenase. Residues methionine 325, aspartate 344, 401–403 (VVE), lysine 408, and serine 430 contribute to the NAD(+) site. The active-site For 3-hydroxyacyl-CoA dehydrogenase activity is the histidine 451. An NAD(+)-binding site is contributed by asparagine 454. Positions 501 and 661 each coordinate substrate.

It in the N-terminal section; belongs to the enoyl-CoA hydratase/isomerase family. The protein in the C-terminal section; belongs to the 3-hydroxyacyl-CoA dehydrogenase family. Heterotetramer of two alpha chains (FadB) and two beta chains (FadA).

The catalysed reaction is a (3S)-3-hydroxyacyl-CoA + NAD(+) = a 3-oxoacyl-CoA + NADH + H(+). The enzyme catalyses a (3S)-3-hydroxyacyl-CoA = a (2E)-enoyl-CoA + H2O. It carries out the reaction a 4-saturated-(3S)-3-hydroxyacyl-CoA = a (3E)-enoyl-CoA + H2O. It catalyses the reaction (3S)-3-hydroxybutanoyl-CoA = (3R)-3-hydroxybutanoyl-CoA. The catalysed reaction is a (3Z)-enoyl-CoA = a 4-saturated (2E)-enoyl-CoA. The enzyme catalyses a (3E)-enoyl-CoA = a 4-saturated (2E)-enoyl-CoA. It functions in the pathway lipid metabolism; fatty acid beta-oxidation. In terms of biological role, involved in the aerobic and anaerobic degradation of long-chain fatty acids via beta-oxidation cycle. Catalyzes the formation of 3-oxoacyl-CoA from enoyl-CoA via L-3-hydroxyacyl-CoA. It can also use D-3-hydroxyacyl-CoA and cis-3-enoyl-CoA as substrate. The protein is Fatty acid oxidation complex subunit alpha of Vibrio vulnificus (strain CMCP6).